The primary structure comprises 339 residues: MO25-like protein 3 (339 aa).

The protein belongs to the Mo25 family.

The protein is MO25-like protein 3 (mop-25.3) of Caenorhabditis elegans.